Reading from the N-terminus, the 258-residue chain is 5'-nucleotidase SurE (258 aa).

Residues aspartate 8, aspartate 9, serine 40, and asparagine 92 each contribute to the a divalent metal cation site.

Belongs to the SurE nucleotidase family. It depends on a divalent metal cation as a cofactor.

The protein localises to the cytoplasm. It carries out the reaction a ribonucleoside 5'-phosphate + H2O = a ribonucleoside + phosphate. Nucleotidase that shows phosphatase activity on nucleoside 5'-monophosphates. The polypeptide is 5'-nucleotidase SurE (Brucella anthropi (strain ATCC 49188 / DSM 6882 / CCUG 24695 / JCM 21032 / LMG 3331 / NBRC 15819 / NCTC 12168 / Alc 37) (Ochrobactrum anthropi)).